The sequence spans 443 residues: Probable glucomannan 4-beta-mannosyltransferase 11 (443 aa).

Asp-52 is an active-site residue. Substrate is bound by residues Asp-111 and Asp-113. Residue Asp-205 is part of the active site. The next 4 helical transmembrane spans lie at 284-304 (IIVHFFTFFFYCFILPTSVFF), 321-341 (ITLFNAIATPRSFYLVIFWVL), 400-420 (EMMVGIYILCCASYNLVFGKT), and 421-441 (VLYIYLYMQALAFIIAGIGFI).

It belongs to the glycosyltransferase 2 family. Plant cellulose synthase-like A subfamily.

The protein localises to the golgi apparatus membrane. It catalyses the reaction GDP-mannose + (glucomannan)n = GDP + (glucomannan)n+1.. Probable mannan synthase which consists of a 4-beta-mannosyltransferase activity on mannan using GDP-mannose. The beta-1,4-mannan product is the backbone for galactomannan synthesis by galactomannan galactosyltransferase. Galactomannan is a noncellulosic polysaccharides of plant cell wall. The polypeptide is Probable glucomannan 4-beta-mannosyltransferase 11 (Arabidopsis thaliana (Mouse-ear cress)).